The chain runs to 81 residues: Trefoil factor 3 (81 aa).

An N-terminal signal peptide occupies residues 1-22 (METRALWLMLLVVLVAGSSGIA). Residues 31-74 (SQCMVPANVRVDCGYPSVTSEQCNNRGCCFDSSIPNVPWCFKPL) enclose the P-type domain. 3 disulfides stabilise this stretch: Cys-33–Cys-59, Cys-43–Cys-58, and Cys-53–Cys-70.

As to quaternary structure, monomer. Homodimer; disulfide-linked. In terms of tissue distribution, expressed in goblet cells of the intestines and colon (at protein level). Expressed abundantly in goblet cells of intestine and colon, and at low levels in stomach. No expression in brain, lung, spleen, kidney, uterus, pancreas, liver, heart or thymus.

The protein localises to the secreted. The protein resides in the extracellular space. Its subcellular location is the extracellular matrix. It is found in the cytoplasm. Involved in the maintenance and repair of the intestinal mucosa. Promotes the mobility of epithelial cells in healing processes (motogen). This is Trefoil factor 3 (Tff3) from Mus musculus (Mouse).